The sequence spans 104 residues: Secreted RxLR effector protein 54 (104 aa).

A signal peptide spans 1 to 19; the sequence is MIFTLLGLALVATKSACIA. Residues 52 to 55 carry the RxLR motif; sequence RSLR. Residue N64 is glycosylated (N-linked (GlcNAc...) asparagine).

It belongs to the RxLR effector family.

Its subcellular location is the secreted. It is found in the host chloroplast envelope. It localises to the host mitochondrion. The protein localises to the host nucleus. The protein resides in the host cytoplasm. Secreted effector that completely suppresses the host cell death induced by cell death-inducing proteins. This is Secreted RxLR effector protein 54 from Plasmopara viticola (Downy mildew of grapevine).